The sequence spans 319 residues: CBBY-like protein (319 aa).

A chloroplast-targeting transit peptide spans 1–65 (MATVKISLSL…YRSSRSVGVT (65 aa)). The active-site Nucleophile is the D82. Positions 82 and 84 each coordinate Mg(2+). D82 contacts substrate. D84 functions as the Proton donor in the catalytic mechanism. Substrate contacts are provided by residues E91, 125-129 (GGKER), 158-161 (HKQK), and 198-204 (STSNEKA). D258 serves as a coordination point for Mg(2+).

The protein belongs to the HAD-like hydrolase superfamily. DOG/GPP family. The cofactor is Mg(2+).

It is found in the plastid. It localises to the chloroplast. The enzyme catalyses D-xylulose 1,5-bisphosphate + H2O = D-xylulose 5-phosphate + phosphate. In terms of biological role, highly selective xylulose-1,5-bisphosphate (XuBP) phosphatase. Also shows activity towards ribulose-1,5-bisphosphate (RuBP) and fructose-1,6-bisphosphate (FBP), but not towards fructose-6-phosphate (F6P) or ribulose-5-phosphate (Ru5P). Degrades xylulose-1,5-bisphosphate, a potent inhibitor of rubisco produced by the rubisco itself. The chain is CBBY-like protein from Arabidopsis thaliana (Mouse-ear cress).